Reading from the N-terminus, the 428-residue chain is ATP-dependent RNA helicase RhlB (428 aa).

A Q motif motif is present at residues 9–37 (KKFSDFALHPKVIEALDNKGFSNCTPIQA). In terms of domain architecture, Helicase ATP-binding spans 40–219 (LPFTVEGRDV…FEQMNHAEYI (180 aa)). ATP is bound at residue 53–60 (AQTGTGKT). The DEAD box motif lies at 165–168 (DEAD). Residues 245-390 (RLLQTLLEEE…VSKYNSQALL (146 aa)) enclose the Helicase C-terminal domain. The segment at 392–428 (DLPAPKRRYRSRSGNHQRRNNLSHRNNTPRNNRKRSG) is disordered. Residues 396–413 (PKRRYRSRSGNHQRRNNL) show a composition bias toward basic residues.

This sequence belongs to the DEAD box helicase family. RhlB subfamily. As to quaternary structure, component of the RNA degradosome, which is a multiprotein complex involved in RNA processing and mRNA degradation.

The protein localises to the cytoplasm. The catalysed reaction is ATP + H2O = ADP + phosphate + H(+). DEAD-box RNA helicase involved in RNA degradation. Has RNA-dependent ATPase activity and unwinds double-stranded RNA. In Photorhabdus laumondii subsp. laumondii (strain DSM 15139 / CIP 105565 / TT01) (Photorhabdus luminescens subsp. laumondii), this protein is ATP-dependent RNA helicase RhlB.